The chain runs to 225 residues: Uracil-DNA glycosylase (225 aa).

D65 serves as the catalytic Proton acceptor.

It belongs to the uracil-DNA glycosylase (UDG) superfamily. UNG family.

It is found in the cytoplasm. It catalyses the reaction Hydrolyzes single-stranded DNA or mismatched double-stranded DNA and polynucleotides, releasing free uracil.. Its function is as follows. Excises uracil residues from the DNA which can arise as a result of misincorporation of dUMP residues by DNA polymerase or due to deamination of cytosine. This chain is Uracil-DNA glycosylase, found in Anoxybacillus flavithermus (strain DSM 21510 / WK1).